Reading from the N-terminus, the 384-residue chain is MAKRDYYEVLGVSKGASSDDIKKGYRRKAKELHPDRNKDDPNAEAQFKEANEAYEVLKDADKKAAYDRYGHAAFEGGMGGGGGGRPGGGFGGGQDFSSAFSDVFDDLFGNFAGGGQRGGGNRASRGSDLRYNLQINLEDAFSGLQKTINVPTSIGCKTCNGSGAEGGSEPSSCPTCSGMGKVRAQQGFFTVERTCPTCSGLGQIIKNPCKSCQGAGRVEKDRALSVNIPAGVETGTRIRLAGEGEAGMRGGPSGDLYIFIEVAEHELFQRDGTNLFCRVPVSMAKAALGGSIEVPTIDGGRGRVQIPSGSQSGRQMRLRGKGMPALRGGSSGDMFIELAVETPVNLTSRQKELLAEFDELSENNNPESSSFFSSVKSFWDSMKG.

A J domain is found at 5–70; that stretch reads DYYEVLGVSK…DKKAAYDRYG (66 aa). A disordered region spans residues 16-47; that stretch reads ASSDDIKKGYRRKAKELHPDRNKDDPNAEAQF. Residues 31-47 are compositionally biased toward basic and acidic residues; it reads ELHPDRNKDDPNAEAQF. Residues 143–221 form a CR-type zinc finger; that stretch reads GLQKTINVPT…CQGAGRVEKD (79 aa). Residues cysteine 156, cysteine 159, cysteine 173, cysteine 176, cysteine 195, cysteine 198, cysteine 209, and cysteine 212 each contribute to the Zn(2+) site. CXXCXGXG motif repeat units follow at residues 156-163, 173-180, 195-202, and 209-216; these read CKTCNGSG, CPTCSGMG, CPTCSGLG, and CKSCQGAG.

This sequence belongs to the DnaJ family. As to quaternary structure, homodimer. It depends on Zn(2+) as a cofactor.

The protein resides in the cytoplasm. Functionally, participates actively in the response to hyperosmotic and heat shock by preventing the aggregation of stress-denatured proteins and by disaggregating proteins, also in an autonomous, DnaK-independent fashion. Unfolded proteins bind initially to DnaJ; upon interaction with the DnaJ-bound protein, DnaK hydrolyzes its bound ATP, resulting in the formation of a stable complex. GrpE releases ADP from DnaK; ATP binding to DnaK triggers the release of the substrate protein, thus completing the reaction cycle. Several rounds of ATP-dependent interactions between DnaJ, DnaK and GrpE are required for fully efficient folding. Also involved, together with DnaK and GrpE, in the DNA replication of plasmids through activation of initiation proteins. This Roseobacter denitrificans (strain ATCC 33942 / OCh 114) (Erythrobacter sp. (strain OCh 114)) protein is Chaperone protein DnaJ.